We begin with the raw amino-acid sequence, 200 residues long: Recombination protein RecR (200 aa).

A C4-type zinc finger spans residues 57–72 (CERCRNYAQSTLCPVC). The Toprim domain maps to 80 to 175 (SLVCIVATPG…GVSRIAQGVP (96 aa)).

Belongs to the RecR family.

In terms of biological role, may play a role in DNA repair. It seems to be involved in an RecBC-independent recombinational process of DNA repair. It may act with RecF and RecO. The protein is Recombination protein RecR of Alcanivorax borkumensis (strain ATCC 700651 / DSM 11573 / NCIMB 13689 / SK2).